Reading from the N-terminus, the 231-residue chain is Homeobox protein engrailed-1a (231 aa).

3 disordered regions span residues 1–29 (MEDQ…AHRN), 43–105 (GCKR…KDSQ), and 121–148 (DRPS…RPRT). The segment covering 43–56 (GCKRERERVTRDSG) has biased composition (basic and acidic residues). The span at 68 to 102 (DGVSSSASSTVSSPVSSRQSNKVEQGSSKSSSPSK) shows a compositional bias: low complexity. Residues 143–202 (DKRPRTAFTAEQLQRLKAEFQTSRYITEQRRQALARELGLNESQIKIWFQNKRAKIKKSS) constitute a DNA-binding region (homeobox).

Belongs to the engrailed homeobox family.

It is found in the nucleus. The chain is Homeobox protein engrailed-1a (eng1a) from Danio rerio (Zebrafish).